Consider the following 208-residue polypeptide: Small ribosomal subunit protein bS6 (208 aa).

Disordered stretches follow at residues 121–143 and 185–208; these read SENN…KPRL and NQQT…GAKP. The segment covering 185–195 has biased composition (low complexity); it reads NQQTSQANNNQ.

It belongs to the bacterial ribosomal protein bS6 family.

In terms of biological role, binds together with bS18 to 16S ribosomal RNA. This is Small ribosomal subunit protein bS6 (rpsF) from Mycoplasma genitalium (strain ATCC 33530 / DSM 19775 / NCTC 10195 / G37) (Mycoplasmoides genitalium).